The following is an 829-amino-acid chain: Probable beta-glucosidase H (829 aa).

The N-linked (GlcNAc...) asparagine glycan is linked to Asn-13. Asp-225 is an active-site residue. N-linked (GlcNAc...) asparagine glycosylation is found at Asn-304, Asn-473, Asn-602, Asn-627, Asn-664, and Asn-749. Residues 389-548 (RMLSNAVIHF…DPEQMVANAV (160 aa)) enclose the PA14 domain.

Belongs to the glycosyl hydrolase 3 family.

The protein localises to the secreted. The enzyme catalyses Hydrolysis of terminal, non-reducing beta-D-glucosyl residues with release of beta-D-glucose.. Its pathway is glycan metabolism; cellulose degradation. Functionally, beta-glucosidases are one of a number of cellulolytic enzymes involved in the degradation of cellulosic biomass. Catalyzes the last step releasing glucose from the inhibitory cellobiose. The protein is Probable beta-glucosidase H (bglH) of Aspergillus fumigatus (strain CBS 144.89 / FGSC A1163 / CEA10) (Neosartorya fumigata).